Here is a 283-residue protein sequence, read N- to C-terminus: Cyclin-C (283 aa).

Positions 46-144 (NVIQALGEHL…VLECEFYLLE (99 aa)) constitute a Cyclin N-terminal domain. The tract at residues 252-283 (TILSKMPKPKPPPNSEGEQGPNGSQNSSYSQS) is disordered. A compositionally biased stretch (polar residues) spans 272–283 (PNGSQNSSYSQS). Ser275 carries the post-translational modification Phosphoserine.

Belongs to the cyclin family. Cyclin C subfamily. Component of the Mediator complex, which is composed of MED1, MED4, MED6, MED7, MED8, MED9, MED10, MED11, MED12, MED13, MED13L, MED14, MED15, MED16, MED17, MED18, MED19, MED20, MED21, MED22, MED23, MED24, MED25, MED26, MED27, MED29, MED30, MED31, CCNC, CDK8 and CDC2L6/CDK11. The MED12, MED13, CCNC and CDK8 subunits form a distinct module termed the CDK8 module. Mediator containing the CDK8 module is less active than Mediator lacking this module in supporting transcriptional activation. Individual preparations of the Mediator complex lacking one or more distinct subunits have been variously termed ARC, CRSP, DRIP, PC2, SMCC and TRAP. The cylin/CDK pair formed by CCNC/CDK8 also associates with the large subunit of RNA polymerase II.

The protein resides in the nucleus. Its function is as follows. Component of the Mediator complex, a coactivator involved in regulated gene transcription of nearly all RNA polymerase II-dependent genes. Mediator functions as a bridge to convey information from gene-specific regulatory proteins to the basal RNA polymerase II transcription machinery. Mediator is recruited to promoters by direct interactions with regulatory proteins and serves as a scaffold for the assembly of a functional preinitiation complex with RNA polymerase II and the general transcription factors. Binds to and activates cyclin-dependent kinase CDK8 that phosphorylates the CTD (C-terminal domain) of the large subunit of RNA polymerase II (RNAp II), which may inhibit the formation of a transcription initiation complex. The sequence is that of Cyclin-C (CCNC) from Bos taurus (Bovine).